The chain runs to 459 residues: MIKVRFAPSPTGYIHIGNIRIALFNWLYAQAHNGTFILRYDNTDVERSKQEYIDAIAVDLEWLGIQPDEIYYQSKRFNRYDEVAEILKQRGLLYPCYETAEELDRRRKIQLSRKLPPVYDRAALKLTPEKKREFETQGRKPHWRFLLPNFENDPLQKKRTEVCWNDAVKGKQTIDLASLSDPVLIREDGSYLYTLPSVVDDIDMAITHIIRGDDHITNTGAQIALFEALNAKLPTFGHINLLTTLLGKGLSKRNNDLSIHSLRADGFESIAVQCLAVLIGTSQNVHPYPNQAVLLEHFNLQDTSRSVAKFDIADLLTLNSHFVHELTYEEVKKRLENLSINGEKVECFWNAIRSNINKVNDAVLWWKMLHDEQNFDTVALEDRAFVRQSLNLLPEGTLNEESWKVWTVALKEKTGRRGKALFMPLRQALTGMDHGPEMGKILQLLGREKVIERLIIQGE.

The 'HIGH' region motif lies at 8–18 (PSPTGYIHIGN). A 'KMSKS' region motif is present at residues 249-253 (GLSKR). K252 provides a ligand contact to ATP.

Belongs to the class-I aminoacyl-tRNA synthetase family. Glutamate--tRNA ligase type 1 subfamily. As to quaternary structure, monomer.

The protein localises to the cytoplasm. The enzyme catalyses tRNA(Glu) + L-glutamate + ATP = L-glutamyl-tRNA(Glu) + AMP + diphosphate. Catalyzes the attachment of glutamate to tRNA(Glu) in a two-step reaction: glutamate is first activated by ATP to form Glu-AMP and then transferred to the acceptor end of tRNA(Glu). This Bartonella henselae (strain ATCC 49882 / DSM 28221 / CCUG 30454 / Houston 1) (Rochalimaea henselae) protein is Glutamate--tRNA ligase 2.